Consider the following 244-residue polypeptide: Ribonuclease 3 (244 aa).

The 128-residue stretch at 21–148 (DHAPLLEAWG…MLGAIYLHHG (128 aa)) folds into the RNase III domain. Glu61 serves as a coordination point for Mg(2+). The active site involves Asp65. Residues Asp134 and Glu137 each contribute to the Mg(2+) site. The active site involves Glu137. One can recognise a DRBM domain in the interval 175–242 (DWKTVLLEKL…AKQAVQKLNE (68 aa)).

Belongs to the ribonuclease III family. In terms of assembly, homodimer. The cofactor is Mg(2+).

It is found in the cytoplasm. The catalysed reaction is Endonucleolytic cleavage to 5'-phosphomonoester.. In terms of biological role, digests double-stranded RNA. Involved in the processing of primary rRNA transcript to yield the immediate precursors to the large and small rRNAs (23S and 16S). Processes some mRNAs, and tRNAs when they are encoded in the rRNA operon. Processes pre-crRNA and tracrRNA of type II CRISPR loci if present in the organism. The polypeptide is Ribonuclease 3 (Corynebacterium jeikeium (strain K411)).